An 875-amino-acid polypeptide reads, in one-letter code: Protein translocase subunit SecA (875 aa).

ATP is bound by residues Q87, 105–109, and D512; that span reads GEGKT. 4 residues coordinate Zn(2+): C860, C862, C871, and H872.

The protein belongs to the SecA family. As to quaternary structure, monomer and homodimer. Part of the essential Sec protein translocation apparatus which comprises SecA, SecYEG and auxiliary proteins SecDF-YajC and YidC. It depends on Zn(2+) as a cofactor.

Its subcellular location is the cell inner membrane. The protein localises to the cytoplasm. It catalyses the reaction ATP + H2O + cellular proteinSide 1 = ADP + phosphate + cellular proteinSide 2.. Part of the Sec protein translocase complex. Interacts with the SecYEG preprotein conducting channel. Has a central role in coupling the hydrolysis of ATP to the transfer of proteins into and across the cell membrane, serving both as a receptor for the preprotein-SecB complex and as an ATP-driven molecular motor driving the stepwise translocation of polypeptide chains across the membrane. The polypeptide is Protein translocase subunit SecA (Buchnera aphidicola subsp. Acyrthosiphon pisum (strain 5A)).